The sequence spans 245 residues: 1-(5-phosphoribosyl)-5-[(5-phosphoribosylamino)methylideneamino] imidazole-4-carboxamide isomerase (245 aa).

Catalysis depends on Asp7, which acts as the Proton acceptor. Asp129 serves as the catalytic Proton donor.

This sequence belongs to the HisA/HisF family.

It is found in the cytoplasm. It carries out the reaction 1-(5-phospho-beta-D-ribosyl)-5-[(5-phospho-beta-D-ribosylamino)methylideneamino]imidazole-4-carboxamide = 5-[(5-phospho-1-deoxy-D-ribulos-1-ylimino)methylamino]-1-(5-phospho-beta-D-ribosyl)imidazole-4-carboxamide. The protein operates within amino-acid biosynthesis; L-histidine biosynthesis; L-histidine from 5-phospho-alpha-D-ribose 1-diphosphate: step 4/9. The polypeptide is 1-(5-phosphoribosyl)-5-[(5-phosphoribosylamino)methylideneamino] imidazole-4-carboxamide isomerase (Escherichia coli O7:K1 (strain IAI39 / ExPEC)).